Reading from the N-terminus, the 480-residue chain is Aspartyl/glutamyl-tRNA(Asn/Gln) amidotransferase subunit B (480 aa).

The protein belongs to the GatB/GatE family. GatB subfamily. In terms of assembly, heterotrimer of A, B and C subunits.

The enzyme catalyses L-glutamyl-tRNA(Gln) + L-glutamine + ATP + H2O = L-glutaminyl-tRNA(Gln) + L-glutamate + ADP + phosphate + H(+). The catalysed reaction is L-aspartyl-tRNA(Asn) + L-glutamine + ATP + H2O = L-asparaginyl-tRNA(Asn) + L-glutamate + ADP + phosphate + 2 H(+). Allows the formation of correctly charged Asn-tRNA(Asn) or Gln-tRNA(Gln) through the transamidation of misacylated Asp-tRNA(Asn) or Glu-tRNA(Gln) in organisms which lack either or both of asparaginyl-tRNA or glutaminyl-tRNA synthetases. The reaction takes place in the presence of glutamine and ATP through an activated phospho-Asp-tRNA(Asn) or phospho-Glu-tRNA(Gln). This Streptococcus pneumoniae serotype 19F (strain G54) protein is Aspartyl/glutamyl-tRNA(Asn/Gln) amidotransferase subunit B.